We begin with the raw amino-acid sequence, 379 residues long: Cyclin-dependent kinase-like 4 (379 aa).

The 283-residue stretch at 4–286 (YEKLAKTGEG…CSQLLESSYF (283 aa)) folds into the Protein kinase domain. Residues 10 to 18 (TGEGSYGVV) and lysine 33 each bind ATP. Positions 45 to 51 (KKIALRE) match the [NKR]KIAxRE motif. Aspartate 126 (proton acceptor) is an active-site residue.

Belongs to the protein kinase superfamily. CMGC Ser/Thr protein kinase family. CDC2/CDKX subfamily.

The protein localises to the cytoplasm. The enzyme catalyses L-seryl-[protein] + ATP = O-phospho-L-seryl-[protein] + ADP + H(+). It carries out the reaction L-threonyl-[protein] + ATP = O-phospho-L-threonyl-[protein] + ADP + H(+). This is Cyclin-dependent kinase-like 4 (CDKL4) from Homo sapiens (Human).